The chain runs to 205 residues: Holliday junction branch migration complex subunit RuvA (205 aa).

A domain I region spans residues 1 to 64 (MIGHIQGVLT…EDAQLLYGFI (64 aa)). Residues 65–143 (SASERSLFRL…DWQPSTPFTD (79 aa)) are domain II. Positions 136–157 (QPSTPFTDRAPLDSQGMDAREH) are disordered. Residues 144–156 (RAPLDSQGMDARE) form a flexible linker region. The tract at residues 157–205 (HPADARTDAISALQSLGYKENQAEKALQKVYSAEHNSETLIRLALKQLS) is domain III.

Belongs to the RuvA family. In terms of assembly, homotetramer. Forms an RuvA(8)-RuvB(12)-Holliday junction (HJ) complex. HJ DNA is sandwiched between 2 RuvA tetramers; dsDNA enters through RuvA and exits via RuvB. An RuvB hexamer assembles on each DNA strand where it exits the tetramer. Each RuvB hexamer is contacted by two RuvA subunits (via domain III) on 2 adjacent RuvB subunits; this complex drives branch migration. In the full resolvosome a probable DNA-RuvA(4)-RuvB(12)-RuvC(2) complex forms which resolves the HJ.

It localises to the cytoplasm. The RuvA-RuvB-RuvC complex processes Holliday junction (HJ) DNA during genetic recombination and DNA repair, while the RuvA-RuvB complex plays an important role in the rescue of blocked DNA replication forks via replication fork reversal (RFR). RuvA specifically binds to HJ cruciform DNA, conferring on it an open structure. The RuvB hexamer acts as an ATP-dependent pump, pulling dsDNA into and through the RuvAB complex. HJ branch migration allows RuvC to scan DNA until it finds its consensus sequence, where it cleaves and resolves the cruciform DNA. The protein is Holliday junction branch migration complex subunit RuvA of Idiomarina loihiensis (strain ATCC BAA-735 / DSM 15497 / L2-TR).